The primary structure comprises 181 residues: Protein Abitram (181 aa).

This sequence belongs to the ABITRAM family. Interacts with F-actin. Interacts with G-actin.

It localises to the nucleus speckle. Its subcellular location is the cell projection. It is found in the lamellipodium. The protein localises to the nucleus. The protein resides in the growth cone. It localises to the dendrite. Its function is as follows. Actin-binding protein that regulates actin polymerization, filopodia dynamics and increases the branching of proximal dendrites of developing neurons. This chain is Protein Abitram, found in Homo sapiens (Human).